A 136-amino-acid chain; its full sequence is Large-conductance mechanosensitive channel (136 aa).

The next 2 helical transmembrane spans lie at 9 to 29 and 79 to 99; these read AFASRGNVIDMAVGIIIGAAF and IQTVIDFTIIAFAIFMGLKAI.

This sequence belongs to the MscL family. Homopentamer.

It localises to the cell inner membrane. Functionally, channel that opens in response to stretch forces in the membrane lipid bilayer. May participate in the regulation of osmotic pressure changes within the cell. This Shewanella sp. (strain W3-18-1) protein is Large-conductance mechanosensitive channel.